Consider the following 365-residue polypeptide: Spermidine/putrescine import ATP-binding protein PotA (365 aa).

The ABC transporter domain maps to 9–239; sequence IRLTNVTKSY…PINHFVANFI (231 aa). Residue 41–48 participates in ATP binding; sequence GPSGCGKT.

It belongs to the ABC transporter superfamily. Spermidine/putrescine importer (TC 3.A.1.11.1) family. As to quaternary structure, the complex is composed of two ATP-binding proteins (PotA), two transmembrane proteins (PotB and PotC) and a solute-binding protein (PotD).

It localises to the cell membrane. The enzyme catalyses ATP + H2O + polyamine-[polyamine-binding protein]Side 1 = ADP + phosphate + polyamineSide 2 + [polyamine-binding protein]Side 1.. In terms of biological role, part of the ABC transporter complex PotABCD involved in spermidine/putrescine import. Responsible for energy coupling to the transport system. The sequence is that of Spermidine/putrescine import ATP-binding protein PotA from Lactiplantibacillus plantarum (strain ATCC BAA-793 / NCIMB 8826 / WCFS1) (Lactobacillus plantarum).